We begin with the raw amino-acid sequence, 498 residues long: Histidine--tRNA ligase (498 aa).

This sequence belongs to the class-II aminoacyl-tRNA synthetase family. Homodimer.

Its subcellular location is the cytoplasm. It carries out the reaction tRNA(His) + L-histidine + ATP = L-histidyl-tRNA(His) + AMP + diphosphate + H(+). The polypeptide is Histidine--tRNA ligase (Mycoplasmopsis synoviae (strain 53) (Mycoplasma synoviae)).